Consider the following 603-residue polypeptide: Elongation factor 4 (603 aa).

The tr-type G domain maps to 7–191 (DNIRNFSIVA…AIVTRLPPPQ (185 aa)). Residues 19-24 (DHGKST) and 138-141 (NKVD) each bind GTP.

The protein belongs to the TRAFAC class translation factor GTPase superfamily. Classic translation factor GTPase family. LepA subfamily.

The protein localises to the cell inner membrane. The catalysed reaction is GTP + H2O = GDP + phosphate + H(+). Functionally, required for accurate and efficient protein synthesis under certain stress conditions. May act as a fidelity factor of the translation reaction, by catalyzing a one-codon backward translocation of tRNAs on improperly translocated ribosomes. Back-translocation proceeds from a post-translocation (POST) complex to a pre-translocation (PRE) complex, thus giving elongation factor G a second chance to translocate the tRNAs correctly. Binds to ribosomes in a GTP-dependent manner. This chain is Elongation factor 4, found in Rhodopseudomonas palustris (strain HaA2).